The chain runs to 269 residues: Formamidopyrimidine-DNA glycosylase (269 aa).

P2 functions as the Schiff-base intermediate with DNA in the catalytic mechanism. E3 (proton donor) is an active-site residue. Catalysis depends on K57, which acts as the Proton donor; for beta-elimination activity. 3 residues coordinate DNA: H90, R109, and K150. The segment at 235–269 (QVYGRAGELCRRCGNVIEIAKHGQRSTFFCRHCQH) adopts an FPG-type zinc-finger fold. Residue R259 is the Proton donor; for delta-elimination activity of the active site.

It belongs to the FPG family. As to quaternary structure, monomer. It depends on Zn(2+) as a cofactor.

The catalysed reaction is Hydrolysis of DNA containing ring-opened 7-methylguanine residues, releasing 2,6-diamino-4-hydroxy-5-(N-methyl)formamidopyrimidine.. The enzyme catalyses 2'-deoxyribonucleotide-(2'-deoxyribose 5'-phosphate)-2'-deoxyribonucleotide-DNA = a 3'-end 2'-deoxyribonucleotide-(2,3-dehydro-2,3-deoxyribose 5'-phosphate)-DNA + a 5'-end 5'-phospho-2'-deoxyribonucleoside-DNA + H(+). Involved in base excision repair of DNA damaged by oxidation or by mutagenic agents. Acts as a DNA glycosylase that recognizes and removes damaged bases. Has a preference for oxidized purines, such as 7,8-dihydro-8-oxoguanine (8-oxoG). Has AP (apurinic/apyrimidinic) lyase activity and introduces nicks in the DNA strand. Cleaves the DNA backbone by beta-delta elimination to generate a single-strand break at the site of the removed base with both 3'- and 5'-phosphates. The polypeptide is Formamidopyrimidine-DNA glycosylase (Yersinia enterocolitica serotype O:8 / biotype 1B (strain NCTC 13174 / 8081)).